A 539-amino-acid chain; its full sequence is Serine/threonine-protein kinase 35 (539 aa).

Residues 103 to 161 (ITIQGPAPPHLGARRRDEARGARAAPLLLPPPPAAMETGKENGARRGTKSPERKRRSPV) are disordered. A compositionally biased stretch (basic residues) spans 148–160 (RGTKSPERKRRSP). One can recognise a Protein kinase domain in the interval 207-535 (YSLLAEIGRG…FELETRMDQV (329 aa)). Residues 213-221 (IGRGSYGVV) and K236 each bind ATP. The active-site Proton acceptor is D365.

Belongs to the protein kinase superfamily. Ser/Thr protein kinase family. In terms of assembly, interacts with PDLIM1/CLP-36. Autophosphorylated.

It localises to the nucleus. It is found in the nucleolus. The protein resides in the cytoplasm. It carries out the reaction L-seryl-[protein] + ATP = O-phospho-L-seryl-[protein] + ADP + H(+). It catalyses the reaction L-threonyl-[protein] + ATP = O-phospho-L-threonyl-[protein] + ADP + H(+). This is Serine/threonine-protein kinase 35 (Stk35) from Mus musculus (Mouse).